We begin with the raw amino-acid sequence, 64 residues long: Large ribosomal subunit protein bL35 (64 aa).

This sequence belongs to the bacterial ribosomal protein bL35 family.

The chain is Large ribosomal subunit protein bL35 from Coxiella burnetii (strain RSA 493 / Nine Mile phase I).